The following is a 392-amino-acid chain: Phosphoglycerate kinase (392 aa).

Substrate contacts are provided by residues 21–23 (DMN), Arg36, 59–62 (HLGR), Arg114, and Arg147. ATP contacts are provided by residues Lys198, Glu320, and 346–349 (GGDT).

It belongs to the phosphoglycerate kinase family. Monomer.

The protein localises to the cytoplasm. The catalysed reaction is (2R)-3-phosphoglycerate + ATP = (2R)-3-phospho-glyceroyl phosphate + ADP. The protein operates within carbohydrate degradation; glycolysis; pyruvate from D-glyceraldehyde 3-phosphate: step 2/5. This chain is Phosphoglycerate kinase, found in Neisseria meningitidis serogroup C / serotype 2a (strain ATCC 700532 / DSM 15464 / FAM18).